The following is a 241-amino-acid chain: Acyl-protein thioesterase 1 (241 aa).

Residues Ser-122, Asp-178, and His-211 each act as charge relay system in the active site.

Belongs to the AB hydrolase superfamily. AB hydrolase 2 family.

It localises to the cytoplasm. The protein resides in the nucleus. The enzyme catalyses S-hexadecanoyl-L-cysteinyl-[protein] + H2O = L-cysteinyl-[protein] + hexadecanoate + H(+). Its function is as follows. Hydrolyzes fatty acids from S-acylated cysteine residues in proteins with a strong preference for palmitoylated G-alpha proteins over other acyl substrates. Mediates the deacylation of G-alpha proteins such as GPA1 in vivo, but has weak or no activity toward palmitoylated Ras proteins. Has weak lysophospholipase activity in vitro; however such activity may not exist in vivo. The protein is Acyl-protein thioesterase 1 of Aspergillus fumigatus (strain ATCC MYA-4609 / CBS 101355 / FGSC A1100 / Af293) (Neosartorya fumigata).